The chain runs to 107 residues: Universal stress protein B homolog (107 aa).

2 helical membrane-spanning segments follow: residues 6 to 26 (TILFALMVVTGVNMIRYLTAL) and 86 to 106 (VRELFVLSTALLGVTLLAAFI).

The protein belongs to the universal stress protein B family.

The protein localises to the cell inner membrane. In Vibrio parahaemolyticus serotype O3:K6 (strain RIMD 2210633), this protein is Universal stress protein B homolog.